We begin with the raw amino-acid sequence, 101 residues long: MTSKLVVALLAAFMLSAALCEAAVLSRISSELRCQCIKTHSTPFNPKLIKELTVIDSGPHCENSEIIVKLVNGKEVCLDPKQKWVQKVVEIFLKKAEKQNA.

The signal sequence occupies residues 1–22 (MTSKLVVALLAAFMLSAALCEA). The residue at position 27 (arginine 27) is a Citrulline. Disulfide bonds link cysteine 34-cysteine 61 and cysteine 36-cysteine 77.

Belongs to the intercrine alpha (chemokine CxC) family. In terms of assembly, homodimer. Interacts with TNFAIP6 (via Link domain); this interaction interferes with chemokine binding to glycosaminoglycans. Post-translationally, citrullination at Arg-27 prevents proteolysis, and dampens tissue inflammation, it also enhances leukocytosis, possibly through impaired chemokine clearance from the blood circulation.

The protein localises to the secreted. Functionally, chemotactic factor that mediates inflammatory response by attracting neutrophils, basophils, and T-cells to clear pathogens and protect the host from infection. Also plays an important role in neutrophil activation. Released in response to an inflammatory stimulus, exerts its effect by binding to the G-protein-coupled receptors CXCR1 and CXCR2, primarily found in neutrophils, monocytes and endothelial cells. G-protein heterotrimer (alpha, beta, gamma subunits) constitutively binds to CXCR1/CXCR2 receptor and activation by IL8 leads to beta and gamma subunits release from Galpha (GNAI2 in neutrophils) and activation of several downstream signaling pathways including PI3K and MAPK pathways. In Felis catus (Cat), this protein is Interleukin-8 (CXCL8).